Here is a 296-residue protein sequence, read N- to C-terminus: 4-hydroxybenzoate octaprenyltransferase (296 aa).

8 helical membrane-spanning segments follow: residues 29–49, 52–72, 103–123, 151–171, 176–196, 220–240, 243–263, and 275–295; these read AGWLLLLWPTLSALWVAAGGF, WHLLSVFTLGTILMRSAGCCI, LVLGAVLALLAFALVLTTNAI, VLGVAFGMGIPMAFAAVLGEV, WLLMLGNLFWVLAYDTEYAMV, VILLCYLAFIVIWDVALMPYV, ALFTIAFALAFGQVAWHYTLI, and FRLNHWLGFTLFVGIAGSYAL.

Belongs to the UbiA prenyltransferase family. Mg(2+) is required as a cofactor.

The protein localises to the cell inner membrane. The catalysed reaction is all-trans-octaprenyl diphosphate + 4-hydroxybenzoate = 4-hydroxy-3-(all-trans-octaprenyl)benzoate + diphosphate. The protein operates within cofactor biosynthesis; ubiquinone biosynthesis. Catalyzes the prenylation of para-hydroxybenzoate (PHB) with an all-trans polyprenyl group. Mediates the second step in the final reaction sequence of ubiquinone-8 (UQ-8) biosynthesis, which is the condensation of the polyisoprenoid side chain with PHB, generating the first membrane-bound Q intermediate 3-octaprenyl-4-hydroxybenzoate. In Albidiferax ferrireducens (strain ATCC BAA-621 / DSM 15236 / T118) (Rhodoferax ferrireducens), this protein is 4-hydroxybenzoate octaprenyltransferase.